We begin with the raw amino-acid sequence, 1765 residues long: RANBP2-like and GRIP domain-containing protein 8 (1765 aa).

The residue at position 19 (Thr-19) is a Phosphothreonine. Ser-21 is modified (phosphoserine). TPR repeat units follow at residues 26 to 59, 60 to 93, and 648 to 681; these read SMKGFYFAKLYYEAKEYDLAKKYICTYINVQERD, PKAHRFLGLLYELEENTEKAVECYRRSVELNPTQ, and EDAHITFAILDAVNGNIEDAVTAFESIKSVVSYW. A disordered region spans residues 760–804; it reads GPLYKNGSLRNADSEIKHSTPSPTKYSLSPSKSYKYSPETPPRWT. Low complexity predominate over residues 778–797; the sequence is STPSPTKYSLSPSKSYKYSP. The RanBD1 1 domain occupies 1036 to 1172; the sequence is HFEPVVQMPE…FEECQRLLLD (137 aa). 2 disordered regions span residues 1216 to 1247 and 1306 to 1330; these read TEEENKGSGTGVAGASDTTIKPNAENTGPTLE and AKLNQSGTSVGTDEESVVTQEEERD. The span at 1231–1244 shows a compositional bias: polar residues; it reads SDTTIKPNAENTGP. Over residues 1317–1329 the composition is skewed to acidic residues; the sequence is TDEESVVTQEEER. Residues 1333–1469 form the RanBD1 2 domain; that stretch reads YFEPVVPLPD…FDEAKTAQEK (137 aa). Positions 1580–1593 are enriched in polar residues; it reads NNSETSSVAQSGSE. Disordered stretches follow at residues 1580–1621 and 1746–1765; these read NNSE…KNLS and KGKLAAVAQDEEENPSRSSG. Basic and acidic residues predominate over residues 1594 to 1617; sequence SKVEPKKCELSKNSDIEQSSDSKV. The GRIP domain maps to 1702–1752; that stretch reads REKSAANLEYLKNVLLQFIFLKPGSERERLLPVINTMLQLSPEEKGKLAAV.

As to quaternary structure, interacts with GTP-bound ARL1.

This Homo sapiens (Human) protein is RANBP2-like and GRIP domain-containing protein 8 (RGPD8).